The sequence spans 177 residues: Adenine phosphoribosyltransferase (177 aa).

The protein belongs to the purine/pyrimidine phosphoribosyltransferase family. Homodimer.

The protein localises to the cytoplasm. The catalysed reaction is AMP + diphosphate = 5-phospho-alpha-D-ribose 1-diphosphate + adenine. Its pathway is purine metabolism; AMP biosynthesis via salvage pathway; AMP from adenine: step 1/1. Its function is as follows. Catalyzes a salvage reaction resulting in the formation of AMP, that is energically less costly than de novo synthesis. This is Adenine phosphoribosyltransferase from Acidothermus cellulolyticus (strain ATCC 43068 / DSM 8971 / 11B).